Consider the following 259-residue polypeptide: Type III pantothenate kinase (259 aa).

6–13 lines the ATP pocket; it reads DCGNTNTV. Position 107–110 (107–110) interacts with substrate; it reads GPDR. Asp109 (proton acceptor) is an active-site residue. Asp129 contributes to the K(+) binding site. Residue Thr132 coordinates ATP. Thr184 serves as a coordination point for substrate.

Belongs to the type III pantothenate kinase family. In terms of assembly, homodimer. The cofactor is NH4(+). K(+) is required as a cofactor.

The protein resides in the cytoplasm. It catalyses the reaction (R)-pantothenate + ATP = (R)-4'-phosphopantothenate + ADP + H(+). It participates in cofactor biosynthesis; coenzyme A biosynthesis; CoA from (R)-pantothenate: step 1/5. Its function is as follows. Catalyzes the phosphorylation of pantothenate (Pan), the first step in CoA biosynthesis. The protein is Type III pantothenate kinase of Jannaschia sp. (strain CCS1).